The following is a 243-amino-acid chain: UPF0246 protein spyM18_2163 (243 aa).

It belongs to the UPF0246 family.

The protein is UPF0246 protein spyM18_2163 of Streptococcus pyogenes serotype M18 (strain MGAS8232).